A 366-amino-acid polypeptide reads, in one-letter code: uncharacterized protein (366 aa).

The next 6 membrane-spanning stretches (helical) occupy residues 30–50 (FWTYMLFYLQFLVGINGAVGI), 66–86 (IIIAFLALVNILLSLIGIIVI), 136–156 (IFISIFIGIYMISVIALGYLA), 162–182 (IILFGTGFFIIVVIIYFLDLL), 198–218 (IGVVLFISFIPPLMNYFIYDI), and 225–245 (YIPESFIVAMIVILIFVIIDV).

The protein resides in the cell membrane. This is an uncharacterized protein from Methanocaldococcus jannaschii (strain ATCC 43067 / DSM 2661 / JAL-1 / JCM 10045 / NBRC 100440) (Methanococcus jannaschii).